Reading from the N-terminus, the 132-residue chain is Tumor suppressor ARF (132 aa).

An interaction with CDK5RAP3 and MDM2 region spans residues 1-64; the sequence is MVRRFLVTLR…LGQQPLPRRP (64 aa). The tract at residues 56 to 132 is disordered; the sequence is GQQPLPRRPG…CLGPSARGPG (77 aa). Residues 71–83 are compositionally biased toward low complexity; that stretch reads RPSGGAAAAPRRG. Over residues 84-99 the composition is skewed to basic residues; sequence AQLRRPRHSHPTRARR. Positions 103-117 are enriched in gly residues; the sequence is GLPGHAGGAAPGRGA.

Does not interact with cyclins, CDK1, CDK2, CDK4, CDK5 or CDK6. Binds to BCL6, E2F1, HUWE1, MDM2, MYC, NPM1/B23, TOP1/TOPOI and UBE2I/UBC9. Interacts with TBRG1 and COMMD1. Interacts with CDKN2AIP and E4F1. Interacts with CDK5RAP3 and MDM2; form a ternary complex involved in regulation of p53/TP53. Interacts with NOP53; the interaction is direct and promotes ARF nucleoplasmic relocalization and ubiquitin-mediated proteasomal degradation. Interacts with TTF1 (via the N-terminal region (NRD) and a C-terminal region); the interaction is direct and inhibits the nucleolar localization of TTF1. In terms of assembly, interacts with C1QBP. In terms of processing, ubiquitinated in normal cells by TRIP12 via the ubiquitin fusion degradation (UFD) pathway, a process that mediates ubiquitination at the N-terminus, regardless of the absence of lysine residues. Ubiquitination leads to its proteasomal degradation. In cancer cells, however, TRIP12 is located in a different cell compartment, preventing ubiquitination and degradation.

It localises to the nucleus. It is found in the nucleolus. The protein resides in the nucleoplasm. The protein localises to the mitochondrion. Functionally, capable of inducing cell cycle arrest in G1 and G2 phases. Acts as a tumor suppressor. Binds to MDM2 and blocks its nucleocytoplasmic shuttling by sequestering it in the nucleolus. This inhibits the oncogenic action of MDM2 by blocking MDM2-induced degradation of p53 and enhancing p53-dependent transactivation and apoptosis. Also induces G2 arrest and apoptosis in a p53-independent manner by preventing the activation of cyclin B1/CDC2 complexes. Binds to BCL6 and down-regulates BCL6-induced transcriptional repression. Binds to E2F1 and MYC and blocks their transcriptional activator activity but has no effect on MYC transcriptional repression. Binds to TOP1/TOPOI and stimulates its activity. This complex binds to rRNA gene promoters and may play a role in rRNA transcription and/or maturation. Interacts with NPM1/B23 and promotes its polyubiquitination and degradation, thus inhibiting rRNA processing. Plays a role in inhibiting ribosome biogenesis, perhaps by binding to the nucleolar localization sequence of transcription termination factor TTF1, and thereby preventing nucleolar localization of TTF1. Interacts with COMMD1 and promotes its 'Lys63'-linked polyubiquitination. Interacts with UBE2I/UBC9 and enhances sumoylation of a number of its binding partners including MDM2 and E2F1. Binds to HUWE1 and represses its ubiquitin ligase activity. May play a role in controlling cell proliferation and apoptosis during mammary gland development. In terms of biological role, may be involved in regulation of autophagy and caspase-independent cell death; the short-lived mitochondrial isoform is stabilized by C1QBP. This chain is Tumor suppressor ARF, found in Homo sapiens (Human).